A 533-amino-acid chain; its full sequence is NAD(P)H-quinone oxidoreductase chain 4 1 (533 aa).

Helical transmembrane passes span 6-26 (FPWL…IPLI), 37-57 (YSLF…WQHF), 87-107 (LSMP…LASW), 113-133 (PKLF…VFTA), 137-157 (MLFF…ISIW), 169-189 (FILY…ALAF), 209-229 (WLEL…LSIF), 243-263 (NAPG…YALI), 277-297 (FAPV…LNAF), 311-331 (ISHM…GLNG), 332-352 (ALLQ…LAGV), 376-396 (FALF…SGFV), 417-437 (VTIL…LSML), and 461-481 (LFVA…PKLT).

It belongs to the complex I subunit 4 family.

Its subcellular location is the cellular thylakoid membrane. It catalyses the reaction a plastoquinone + NADH + (n+1) H(+)(in) = a plastoquinol + NAD(+) + n H(+)(out). It carries out the reaction a plastoquinone + NADPH + (n+1) H(+)(in) = a plastoquinol + NADP(+) + n H(+)(out). In terms of biological role, NDH-1 shuttles electrons from NAD(P)H, via FMN and iron-sulfur (Fe-S) centers, to quinones in the respiratory chain. The immediate electron acceptor for the enzyme in this species is believed to be plastoquinone. Couples the redox reaction to proton translocation (for every two electrons transferred, four hydrogen ions are translocated across the cytoplasmic membrane), and thus conserves the redox energy in a proton gradient. The polypeptide is NAD(P)H-quinone oxidoreductase chain 4 1 (Synechococcus elongatus (strain ATCC 33912 / PCC 7942 / FACHB-805) (Anacystis nidulans R2)).